We begin with the raw amino-acid sequence, 249 residues long: Microvitellogenin (249 aa).

Residues 1–17 form the signal peptide; it reads MLRTTVVLLTLAAIAFA.

Small vitellogenic protein found in females. It is synthesized in the fat body, secreted into the hemolymph, and taken up by developing oocytes. This is Microvitellogenin (MVG) from Manduca sexta (Tobacco hawkmoth).